Here is a 938-residue protein sequence, read N- to C-terminus: Protocadherin gamma-C4 (938 aa).

The first 29 residues, 1–29 (MLRKVRSWTEIWRWATLLFLFYHLGYVCG), serve as a signal peptide directing secretion. 6 consecutive Cadherin domains span residues 30–133 (QIRY…APRF), 134–242 (PRQQ…APAF), 243–350 (QQSS…APYI), 351–455 (TVTS…PPSF), 456–565 (FQRS…APAV), and 572–676 (PGSL…VPDL). Residues 30–692 (QIRYPVPEES…REGESRLTLY (663 aa)) lie on the Extracellular side of the membrane. 3 N-linked (GlcNAc...) asparagine glycosylation sites follow: asparagine 265, asparagine 276, and asparagine 444. A helical membrane pass occupies residues 693 to 713 (LAVSLVAICFVSFGSFVALLS). At 714–938 (KCLRGAACGV…KKKSGKKEKK (225 aa)) the chain is on the cytoplasmic side. Disordered regions lie at residues 791–847 (PSAP…WPNN) and 908–938 (ATLTNAAGKRDGKAPAGGNGNKKKSGKKEKK). A compositionally biased stretch (polar residues) spans 822 to 847 (WRFSQAQRPGTSGSQNGDDTGTWPNN). Over residues 928–938 (NKKKSGKKEKK) the composition is skewed to basic residues.

It is found in the cell membrane. Functionally, potential calcium-dependent cell-adhesion protein. May be involved in the establishment and maintenance of specific neuronal connections in the brain. The sequence is that of Protocadherin gamma-C4 (PCDHGC4) from Homo sapiens (Human).